Consider the following 182-residue polypeptide: Glutathione-regulated potassium-efflux system ancillary protein KefG (182 aa).

This sequence belongs to the NAD(P)H dehydrogenase (quinone) family. KefG subfamily. As to quaternary structure, interacts with KefB.

The protein localises to the cell inner membrane. It catalyses the reaction a quinone + NADH + H(+) = a quinol + NAD(+). It carries out the reaction a quinone + NADPH + H(+) = a quinol + NADP(+). Regulatory subunit of a potassium efflux system that confers protection against electrophiles. Required for full activity of KefB. The chain is Glutathione-regulated potassium-efflux system ancillary protein KefG from Yersinia pestis bv. Antiqua (strain Nepal516).